Consider the following 46-residue polypeptide: Protein PsbN (46 aa).

The chain crosses the membrane as a helical span at residues 10-30; it reads LIITILAVTIAFTAVSLYTAF.

This sequence belongs to the PsbN family.

Its subcellular location is the cellular thylakoid membrane. May play a role in photosystem I and II biogenesis. The chain is Protein PsbN from Acaryochloris marina (strain MBIC 11017).